We begin with the raw amino-acid sequence, 477 residues long: Glutamyl-tRNA(Gln) amidotransferase subunit A (477 aa).

Active-site charge relay system residues include lysine 76 and serine 151. Serine 175 serves as the catalytic Acyl-ester intermediate.

This sequence belongs to the amidase family. GatA subfamily. In terms of assembly, heterotrimer of A, B and C subunits.

It carries out the reaction L-glutamyl-tRNA(Gln) + L-glutamine + ATP + H2O = L-glutaminyl-tRNA(Gln) + L-glutamate + ADP + phosphate + H(+). Functionally, allows the formation of correctly charged Gln-tRNA(Gln) through the transamidation of misacylated Glu-tRNA(Gln) in organisms which lack glutaminyl-tRNA synthetase. The reaction takes place in the presence of glutamine and ATP through an activated gamma-phospho-Glu-tRNA(Gln). This chain is Glutamyl-tRNA(Gln) amidotransferase subunit A, found in Chlorobium phaeobacteroides (strain BS1).